The following is a 250-amino-acid chain: Pyrroloquinoline-quinone synthase (250 aa).

The protein belongs to the PqqC family.

The enzyme catalyses 6-(2-amino-2-carboxyethyl)-7,8-dioxo-1,2,3,4,7,8-hexahydroquinoline-2,4-dicarboxylate + 3 O2 = pyrroloquinoline quinone + 2 H2O2 + 2 H2O + H(+). It functions in the pathway cofactor biosynthesis; pyrroloquinoline quinone biosynthesis. Ring cyclization and eight-electron oxidation of 3a-(2-amino-2-carboxyethyl)-4,5-dioxo-4,5,6,7,8,9-hexahydroquinoline-7,9-dicarboxylic-acid to PQQ. The polypeptide is Pyrroloquinoline-quinone synthase (Ectopseudomonas mendocina (strain ymp) (Pseudomonas mendocina)).